The following is a 655-amino-acid chain: RNA-binding protein EWS (655 aa).

The EAD (Gln/Pro/Thr-rich) stretch occupies residues 1-285 (MASTDYSTYS…GVYGQESGGF (285 aa)). 31 consecutive repeat copies span residues 8-16 (TYSQAAAQQ), 17-27 (GYSAYTAQPTQ), 28-34 (GYAQTTQ), 35-42 (AYGQQSYG), 43-50 (TYGQPTDV), 51-59 (SYTQAQTTA), 60-68 (TYGQTAYAT), 69-75 (SYGQPPT), 76-84 (GYSTPTAPQ), 85-91 (AYSQPVQ), 92-110 (GYGT…TTQA), 111-116 (SYAAQT), 117-125 (AYGTQPAYP), 126-156 (TYGQ…SSTG), 157-163 (GYNQPSL), 164-170 (GYGQSNY), 171-177 (SYPQVPG), 178-188 (SYPMQPVTAPP), 189-193 (SYPPT), 194-201 (SYSSSQPT), 202-206 (SYDQS), 207-212 (SYSQQN), 213-218 (TYGQPS), 219-224 (SYGQQS), 225-230 (SYGQQS), 231-238 (SYGQQPPT), 239-245 (SYPPQTG), 246-252 (SYSQAPS), 253-259 (QYSQQSS), 260-276 (SYGQ…SSMG), and 277-285 (VYGQESGGF). The interval 8 to 285 (TYSQAAAQQG…GVYGQESGGF (278 aa)) is 31 X approximate tandem repeats. A disordered region spans residues 121 to 350 (QPAYPTYGQQ…EGPDLDLGLP (230 aa)). Polar residues-rich tracts occupy residues 127–137 (YGQQPTATAPT) and 146–172 (AETS…NYSY). Residues 192-266 (PTSYSSSQPT…QSSSYGQQSS (75 aa)) are compositionally biased toward low complexity. Positions 256–285 (QQSSSYGQQSSFRQDHPSSMGVYGQESGGF) constitute an IQ domain. Ser-266 bears the Phosphoserine; by PKC mark. Arg-300, Arg-302, Arg-304, Arg-309, Arg-314, Arg-317, and Arg-321 each carry asymmetric dimethylarginine. The segment covering 308 to 334 (DRGGMSRGGRGGGRGGLGAGERGGFNK) has biased composition (gly residues). A compositionally biased stretch (low complexity) spans 335–350 (PGGPMDEGPDLDLGLP). An RRM domain is found at 360–446 (SAIYVQGLND…SKLKVSLARK (87 aa)). At Lys-438 the chain carries N6-acetyllysine. 2 disordered regions span residues 447-524 (KPPM…WQCP) and 544-655 (APKP…DRPY). 2 positions are modified to asymmetric dimethylarginine: Arg-454 and Arg-463. An Asymmetric dimethylarginine; alternate modification is found at Arg-470. An Omega-N-methylarginine; alternate modification is found at Arg-470. Residues 471-489 (GGPGGPGGPGGPMGRMGGR) are compositionally biased toward gly residues. The residue at position 485 (Arg-485) is an Omega-N-methylarginine. Arg-489 carries the post-translational modification Asymmetric dimethylarginine; by PRMT8. An asymmetric dimethylarginine mark is found at Arg-493, Arg-499, and Arg-502. At Arg-505 the chain carries Asymmetric dimethylarginine; alternate. Omega-N-methylarginine; alternate is present on Arg-505. A RanBP2-type zinc finger spans residues 517–548 (RAGDWQCPNPGCGNQNFAWRTECNQCKAPKPE). Residues 550–559 (FLPPPFPPPG) are compositionally biased toward pro residues. An asymmetric dimethylarginine mark is found at Arg-562 and Arg-564. The segment covering 565–590 (GGPGGMRGGRGGLMDRGGPGGMFRGG) has biased composition (gly residues). Arg-571 is modified (asymmetric dimethylarginine; alternate; by PRMT8). Omega-N-methylarginine; alternate; by PRMT8 is present on Arg-571. Arg-574, Arg-580, Arg-588, and Arg-591 each carry asymmetric dimethylarginine. Residues 591–605 (RGGDRGGFRGGRGMD) show a composition bias toward basic and acidic residues. Residue Arg-595 is modified to Asymmetric dimethylarginine; alternate; by PRMT8. Arg-595 bears the Omega-N-methylarginine; alternate; by PRMT8 mark. At Arg-599 the chain carries Asymmetric dimethylarginine. Arg-602 bears the Asymmetric dimethylarginine; by PRMT8 mark. Residue Arg-606 is modified to Asymmetric dimethylarginine; alternate; by PRMT8. Arg-606 carries the post-translational modification Omega-N-methylarginine; alternate; by PRMT8. The span at 606 to 617 (RGGFGGGRRGGP) shows a compositional bias: gly residues. An Asymmetric dimethylarginine; alternate modification is found at Arg-614. At Arg-614 the chain carries Omega-N-methylarginine; alternate. 2 positions are modified to asymmetric dimethylarginine: Arg-632 and Arg-635. The Nuclear localization signal signature appears at 638–655 (PGKMDKGEHRQERRDRPY). Basic and acidic residues predominate over residues 640–655 (KMDKGEHRQERRDRPY).

The protein belongs to the RRM TET family. In terms of assembly, binds RNA, POLR2C, SF1 and calmodulin. Interacts with PTK2B and TDRD3. Forms a complex with REC8, PRDM9, SYCP3 and SYCP1; complex formation is dependent of phosphorylated form of REC8 and requires PRDM9 bound to hotspot DNA; EWSR1 joins PRDM9 with the chromosomal axis through REC8. Post-translationally, phosphorylated; calmodulin-binding inhibits phosphorylation of Ser-266. Highly methylated on arginine residues. Methylation is mediated by PRMT1 and, at lower level by PRMT8.

The protein resides in the nucleus. The protein localises to the cytoplasm. It localises to the cell membrane. Its function is as follows. Binds to ssRNA containing the consensus sequence 5'-AGGUAA-3'. Might function as a transcriptional repressor. The sequence is that of RNA-binding protein EWS (Ewsr1) from Mus musculus (Mouse).